Consider the following 134-residue polypeptide: Large ribosomal subunit protein uL24 (134 aa).

Belongs to the universal ribosomal protein uL24 family. Part of the 50S ribosomal subunit.

One of two assembly initiator proteins, it binds directly to the 5'-end of the 23S rRNA, where it nucleates assembly of the 50S subunit. In terms of biological role, located at the polypeptide exit tunnel on the outside of the subunit. This chain is Large ribosomal subunit protein uL24, found in Sulfolobus acidocaldarius (strain ATCC 33909 / DSM 639 / JCM 8929 / NBRC 15157 / NCIMB 11770).